The primary structure comprises 1036 residues: Potassium-transporting ATPase alpha chain 2 (1036 aa).

Residues 1–50 (MRRKTEIYSVELNGTKDVKPADQRDDKKFKGAKNKDLEPNKSHEKEELKK) form a disordered region. Residues 1 to 99 (MRRKTEIYSV…PNTLTPPKQT (99 aa)) lie on the Cytoplasmic side of the membrane. Residues 14 to 50 (GTKDVKPADQRDDKKFKGAKNKDLEPNKSHEKEELKK) are compositionally biased toward basic and acidic residues. A helical membrane pass occupies residues 100-120 (PEIIKFLKQMVGGFSILLWIG). Over 121–143 (AALCWIAFVIQYVNNSASLDNVY) the chain is Lumenal. Residues 144 to 164 (LGAILVLVVILTGIFAYYQEA) traverse the membrane as a helical segment. Residues 165-300 (KSTNIMASFS…SEKTPIAIEI (136 aa)) are Cytoplasmic-facing. A helical membrane pass occupies residues 301 to 320 (EHFVHIVAGVAVSIDIIFFI). Residues 321–332 (TAVCMKYYVLDA) are Lumenal-facing. A helical membrane pass occupies residues 333-350 (IIFLISIIVANVPEGLLA). At 351 to 784 (TVTVTLSLTA…EEGRLIFDNL (434 aa)) the chain is on the cytoplasmic side. Aspartate 388 (4-aspartylphosphate intermediate) is an active-site residue. Residues aspartate 729 and aspartate 733 each contribute to the Mg(2+) site. The chain crosses the membrane as a helical span at residues 785-804 (KKTIAYTLTKNIAELCPFLI). The Lumenal portion of the chain corresponds to 805 to 814 (YIVAGLPLPI). The chain crosses the membrane as a helical span at residues 815–835 (GTITILFIDLGTDIIPSIALA). The Cytoplasmic segment spans residues 836 to 855 (YEKAESDIMNRKPRHKKKDR). Residues 856–878 (LVNTQLAIYSYLHIGLMQALGGF) traverse the membrane as a helical segment. The Lumenal portion of the chain corresponds to 879-930 (LVYFTVYAQQGFWPTSLINLRVAWETDDINDLEDSYGQEWTRYQRKYLEWTG). Residues 931-950 (STAFFVAIMIQQIADLIIRK) traverse the membrane as a helical segment. Residues 951–964 (TRRNSIFQQGLFRN) lie on the Cytoplasmic side of the membrane. Residue serine 955 is modified to Phosphoserine; by PKA. The helical transmembrane segment at 965–983 (KVIWVGIASQVIVALILSY) threads the bilayer. The Lumenal segment spans residues 984 to 998 (GLGSVPALSFTMLRV). The helical transmembrane segment at 999 to 1019 (QYWFVAVPHAILIWVYDEMRK) threads the bilayer. Over 1020–1036 (LFIRLYPGSWWDKNMYY) the chain is Cytoplasmic.

It belongs to the cation transport ATPase (P-type) (TC 3.A.3) family. Type IIC subfamily. The ATPase pump is composed of a catalytic alpha subunit and an auxiliary non-catalytic beta subunit. The alpha subunit pairs with the beta subunit of gastric H(+)/K(+) ATPase ATP4B or the beta subunit of Na(+)/K(+) ATPases ATP1B1 and ATP1B3; this interaction is required for the formation of a functionally active pump and its targeting at the plasma membrane. In terms of tissue distribution, expressed at high levels in distal colon, coagulating and preputial glands; at much lower levels in proximal colon, kidney, uterus, brain, placenta and lung; and at trace levels in heart and forestomach. Expressed in distal colon epithelium (at protein level). Expressed in anterior prostate (at protein level).

The protein localises to the apical cell membrane. The catalysed reaction is K(+)(out) + ATP + H2O + H(+)(in) = K(+)(in) + ADP + phosphate + 2 H(+)(out). It catalyses the reaction K(+)(out) + Na(+)(in) + ATP + H2O = K(+)(in) + Na(+)(out) + ADP + phosphate + H(+). With respect to regulation, up-regulated by K(+) ions in a dose-dependent way. Its function is as follows. The catalytic subunit of a H(+)/K(+) ATPase and/or Na(+)/K(+) ATPase pump which transports K(+) ions in exchange for Na(+) and/or H(+) ions across the apical membrane of epithelial cells. Uses ATP as an energy source to pump K(+) ions into the cell while transporting Na(+) and/or H(+) ions to the extracellular compartment. Involved in the maintenance of electrolyte homeostasis through K(+) ion absorption in kidney and colon. In the airway epithelium, may play a primary role in mucus acidification regulating its viscosity and clearance. This chain is Potassium-transporting ATPase alpha chain 2 (Atp12a), found in Rattus norvegicus (Rat).